We begin with the raw amino-acid sequence, 694 residues long: Elongation factor G (694 aa).

Residues 8–285 (EKVRNIGIAA…AVVELLPSPQ (278 aa)) form the tr-type G domain. Residues 17 to 24 (AHIDAGKT), 81 to 85 (DTPGH), and 135 to 138 (NKMD) each bind GTP.

The protein belongs to the TRAFAC class translation factor GTPase superfamily. Classic translation factor GTPase family. EF-G/EF-2 subfamily.

The protein resides in the cytoplasm. Functionally, catalyzes the GTP-dependent ribosomal translocation step during translation elongation. During this step, the ribosome changes from the pre-translocational (PRE) to the post-translocational (POST) state as the newly formed A-site-bound peptidyl-tRNA and P-site-bound deacylated tRNA move to the P and E sites, respectively. Catalyzes the coordinated movement of the two tRNA molecules, the mRNA and conformational changes in the ribosome. This Synechococcus sp. (strain ATCC 27144 / PCC 6301 / SAUG 1402/1) (Anacystis nidulans) protein is Elongation factor G (fusA).